Here is a 255-residue protein sequence, read N- to C-terminus: Coiled-coil domain-containing 92B (255 aa).

Positions 28–90 (LRDLHLEILR…AAANAELRRE (63 aa)) form a coiled coil. The disordered stretch occupies residues 149-255 (QRLQAPRPGP…SQPSAPGDPE (107 aa)). Residues 166–177 (PRRRALRARRPP) show a composition bias toward basic residues. The span at 242 to 255 (QPAPSQPSAPGDPE) shows a compositional bias: pro residues.

This is Coiled-coil domain-containing 92B from Homo sapiens (Human).